The primary structure comprises 358 residues: GMP reductase (358 aa).

NADP(+) is bound by residues 26-27 (SR), lysine 78, 130-132 (DVA), and 181-182 (IG). Residues glycine 182, glycine 184, and cysteine 187 each coordinate K(+). The active-site Thioimidate intermediate is cysteine 187. Threonine 189 serves as the catalytic Proton donor/acceptor. Arginine 190 serves as a coordination point for K(+). Residues 220–222 (DGG), 243–244 (GG), 269–271 (GMS), and 287–291 (RASEG) contribute to the GMP site. NADP(+) contacts are provided by residues methionine 270, 286-287 (YR), and 315-318 (SACT).

It belongs to the IMPDH/GMPR family. GuaC type 1 subfamily. Homotetramer.

It carries out the reaction IMP + NH4(+) + NADP(+) = GMP + NADPH + 2 H(+). Its function is as follows. Catalyzes the irreversible NADPH-dependent deamination of GMP to IMP. It functions in the conversion of nucleobase, nucleoside and nucleotide derivatives of G to A nucleotides, and in maintaining the intracellular balance of A and G nucleotides. The polypeptide is GMP reductase (Caenorhabditis elegans).